A 357-amino-acid polypeptide reads, in one-letter code: S-adenosyl-L-methionine:benzoic acid/salicylic acid carboxyl methyltransferase 1 (357 aa).

Tyrosine 18 lines the S-adenosyl-L-homocysteine pocket. Glutamine 25 is a binding site for benzoate. 6 residues coordinate S-adenosyl-L-homocysteine: cysteine 59, asparagine 64, aspartate 96, leucine 97, serine 135, and phenylalanine 136. Benzoate is bound at residue tryptophan 157. Residues asparagine 168, aspartate 254, phenylalanine 256, and asparagine 257 each coordinate Mg(2+). Glutamine 260 serves as a coordination point for benzoate.

This sequence belongs to the methyltransferase superfamily. Type-7 methyltransferase family. As to expression, predominantly expressed in petal limbs and tubes of corollas.

The catalysed reaction is benzoate + S-adenosyl-L-methionine = methyl benzoate + S-adenosyl-L-homocysteine. It catalyses the reaction salicylate + S-adenosyl-L-methionine = methyl salicylate + S-adenosyl-L-homocysteine. It functions in the pathway aromatic compound metabolism. Functionally, converts benzoic acid into the volatile ester methyl benzoates. This scent, mostly produced in a rhythmical, diurnal manner, attracts the pollinators. In Petunia hybrida (Petunia), this protein is S-adenosyl-L-methionine:benzoic acid/salicylic acid carboxyl methyltransferase 1.